We begin with the raw amino-acid sequence, 152 residues long: Venom protein family 1 protein 2 (152 aa).

The first 21 residues, 1–21 (MAKLVFISFLVASFCLIGCFG), serve as a signal peptide directing secretion. A disulfide bridge connects residues C70 and C150.

It belongs to the insect vpf1 family. Expressed by the venom gland (posterior main gland) (at protein level).

It localises to the secreted. The protein is Venom protein family 1 protein 2 of Platymeris rhadamanthus (Red spot assassin bug).